Consider the following 227-residue polypeptide: Cytochrome c oxidase subunit 2 (227 aa).

Residues 1–14 are Mitochondrial intermembrane-facing; that stretch reads MAYPFQLGLQDATS. Residues 15–45 form a helical membrane-spanning segment; the sequence is PIMEELTNFHDHTLMIVFLISSLVLYIISLM. Topologically, residues 46–59 are mitochondrial matrix; it reads LTTKLTHTSTMDAQ. Residues 60-87 traverse the membrane as a helical segment; sequence EVETIWTILPAAILVLIALPSLRILYMM. The Mitochondrial intermembrane segment spans residues 88–227; the sequence is DEINNPALTV…YFENWSASMI (140 aa). Cu cation is bound by residues H161, C196, E198, C200, H204, and M207. E198 is a Mg(2+) binding site. The residue at position 218 (Y218) is a Phosphotyrosine.

This sequence belongs to the cytochrome c oxidase subunit 2 family. In terms of assembly, component of the cytochrome c oxidase (complex IV, CIV), a multisubunit enzyme composed of 14 subunits. The complex is composed of a catalytic core of 3 subunits MT-CO1, MT-CO2 and MT-CO3, encoded in the mitochondrial DNA, and 11 supernumerary subunits COX4I, COX5A, COX5B, COX6A, COX6B, COX6C, COX7A, COX7B, COX7C, COX8 and NDUFA4, which are encoded in the nuclear genome. The complex exists as a monomer or a dimer and forms supercomplexes (SCs) in the inner mitochondrial membrane with NADH-ubiquinone oxidoreductase (complex I, CI) and ubiquinol-cytochrome c oxidoreductase (cytochrome b-c1 complex, complex III, CIII), resulting in different assemblies (supercomplex SCI(1)III(2)IV(1) and megacomplex MCI(2)III(2)IV(2)). Found in a complex with TMEM177, COA6, COX18, COX20, SCO1 and SCO2. Interacts with TMEM177 in a COX20-dependent manner. Interacts with COX20. Interacts with COX16. The cofactor is Cu cation.

It is found in the mitochondrion inner membrane. It carries out the reaction 4 Fe(II)-[cytochrome c] + O2 + 8 H(+)(in) = 4 Fe(III)-[cytochrome c] + 2 H2O + 4 H(+)(out). Component of the cytochrome c oxidase, the last enzyme in the mitochondrial electron transport chain which drives oxidative phosphorylation. The respiratory chain contains 3 multisubunit complexes succinate dehydrogenase (complex II, CII), ubiquinol-cytochrome c oxidoreductase (cytochrome b-c1 complex, complex III, CIII) and cytochrome c oxidase (complex IV, CIV), that cooperate to transfer electrons derived from NADH and succinate to molecular oxygen, creating an electrochemical gradient over the inner membrane that drives transmembrane transport and the ATP synthase. Cytochrome c oxidase is the component of the respiratory chain that catalyzes the reduction of oxygen to water. Electrons originating from reduced cytochrome c in the intermembrane space (IMS) are transferred via the dinuclear copper A center (CU(A)) of subunit 2 and heme A of subunit 1 to the active site in subunit 1, a binuclear center (BNC) formed by heme A3 and copper B (CU(B)). The BNC reduces molecular oxygen to 2 water molecules using 4 electrons from cytochrome c in the IMS and 4 protons from the mitochondrial matrix. In Rhabdomys pumilio (Four-striped grass mouse), this protein is Cytochrome c oxidase subunit 2 (MT-CO2).